Reading from the N-terminus, the 286-residue chain is ATP synthase gamma chain (286 aa).

Belongs to the ATPase gamma chain family. In terms of assembly, F-type ATPases have 2 components, CF(1) - the catalytic core - and CF(0) - the membrane proton channel. CF(1) has five subunits: alpha(3), beta(3), gamma(1), delta(1), epsilon(1). CF(0) has three main subunits: a, b and c.

It is found in the cell membrane. Produces ATP from ADP in the presence of a proton gradient across the membrane. The gamma chain is believed to be important in regulating ATPase activity and the flow of protons through the CF(0) complex. The chain is ATP synthase gamma chain from Malacoplasma penetrans (strain HF-2) (Mycoplasma penetrans).